A 62-amino-acid polypeptide reads, in one-letter code: Large ribosomal subunit protein bL32 (62 aa).

The span at 1 to 16 (MAVPKRKTSPSRRGMR) shows a compositional bias: basic residues. The segment at 1–44 (MAVPKRKTSPSRRGMRRSADALKAPTYVEDKDSGELRRPHHIDL) is disordered. Residues 28 to 44 (VEDKDSGELRRPHHIDL) are compositionally biased toward basic and acidic residues.

This sequence belongs to the bacterial ribosomal protein bL32 family.

This Methylorubrum extorquens (strain CM4 / NCIMB 13688) (Methylobacterium extorquens) protein is Large ribosomal subunit protein bL32.